We begin with the raw amino-acid sequence, 430 residues long: Adenylosuccinate synthetase (430 aa).

GTP is bound by residues 12–18 and 40–42; these read GDEGKGK and GHT. The Proton acceptor role is filled by aspartate 13. Mg(2+) contacts are provided by aspartate 13 and glycine 40. IMP contacts are provided by residues 13-16, 38-41, threonine 128, arginine 142, glutamine 223, threonine 238, and arginine 302; these read DEGK and NAGH. Catalysis depends on histidine 41, which acts as the Proton donor. Substrate is bound at residue 298–304; it reads TTTGRPR. GTP-binding positions include arginine 304, 330–332, and 412–414; these read SID and SVG.

It belongs to the adenylosuccinate synthetase family. In terms of assembly, homodimer. It depends on Mg(2+) as a cofactor.

It localises to the cytoplasm. It carries out the reaction IMP + L-aspartate + GTP = N(6)-(1,2-dicarboxyethyl)-AMP + GDP + phosphate + 2 H(+). Its pathway is purine metabolism; AMP biosynthesis via de novo pathway; AMP from IMP: step 1/2. Plays an important role in the de novo pathway of purine nucleotide biosynthesis. Catalyzes the first committed step in the biosynthesis of AMP from IMP. The protein is Adenylosuccinate synthetase of Streptococcus equi subsp. zooepidemicus (strain H70).